Consider the following 339-residue polypeptide: DNA repair protein RAD51 homolog 1 (339 aa).

The segment at Met-1–Glu-23 is disordered. One can recognise a HhH domain in the interval Thr-48–Glu-77. Gly-127–Thr-134 provides a ligand contact to ATP.

It belongs to the RecA family. RAD51 subfamily. In terms of assembly, forms linear homooligomers, giving rise to a RAD51 nucleoprotein filament, which is essential for strand-pairing reactions during DNA recombination. In terms of tissue distribution, expressed at high levels in lymphoid and reproductive organs.

Its subcellular location is the nucleus. The protein resides in the cytoplasm. The protein localises to the chromosome. In terms of biological role, plays an important role in homologous strand exchange, a key step in DNA repair through homologous recombination (HR). Binds to single-stranded DNA in an ATP-dependent manner to form nucleoprotein filaments which are essential for the homology search and strand exchange. Catalyzes the recognition of homology and strand exchange between homologous DNA partners to form a joint molecule between a processed DNA break and the repair template. Recruited to resolve stalled replication forks during replication stress. Also involved in interstrand cross-link repair. This is DNA repair protein RAD51 homolog 1 (RAD51A) from Gallus gallus (Chicken).